A 53-amino-acid polypeptide reads, in one-letter code: uncharacterized protein (53 aa).

This is an uncharacterized protein from Thermoproteus tenax (TTV1).